We begin with the raw amino-acid sequence, 513 residues long: Putative ribose/galactose/methyl galactoside import ATP-binding protein (513 aa).

ABC transporter domains follow at residues 24 to 260 (LSAE…VGRE) and 270 to 510 (VPIG…VMEL). 56–63 (GENGAGKS) contributes to the ATP binding site.

The protein belongs to the ABC transporter superfamily. Carbohydrate importer 2 (CUT2) (TC 3.A.1.2) family.

It localises to the cell inner membrane. It catalyses the reaction D-ribose(out) + ATP + H2O = D-ribose(in) + ADP + phosphate + H(+). The catalysed reaction is D-galactose(out) + ATP + H2O = D-galactose(in) + ADP + phosphate + H(+). In terms of biological role, part of an ABC transporter complex involved in carbohydrate import. Could be involved in ribose, galactose and/or methyl galactoside import. Responsible for energy coupling to the transport system. This chain is Putative ribose/galactose/methyl galactoside import ATP-binding protein, found in Rhizobium johnstonii (strain DSM 114642 / LMG 32736 / 3841) (Rhizobium leguminosarum bv. viciae).